A 192-amino-acid chain; its full sequence is Probable nicotinate-nucleotide adenylyltransferase (192 aa).

This sequence belongs to the NadD family.

The catalysed reaction is nicotinate beta-D-ribonucleotide + ATP + H(+) = deamido-NAD(+) + diphosphate. Its pathway is cofactor biosynthesis; NAD(+) biosynthesis; deamido-NAD(+) from nicotinate D-ribonucleotide: step 1/1. Catalyzes the reversible adenylation of nicotinate mononucleotide (NaMN) to nicotinic acid adenine dinucleotide (NaAD). This chain is Probable nicotinate-nucleotide adenylyltransferase, found in Rhizobium leguminosarum bv. trifolii (strain WSM2304).